The primary structure comprises 804 residues: Type 2 DNA topoisomerase 6 subunit B (804 aa).

Residues asparagine 58, aspartate 89, 110-111, 120-127, and lysine 629 contribute to the ATP site; these read SR and GQQGIGIS.

The protein belongs to the TOP6B family. In terms of assembly, homodimer. Heterotetramer of two Top6A and two Top6B chains.

The catalysed reaction is ATP-dependent breakage, passage and rejoining of double-stranded DNA.. Functionally, relaxes both positive and negative superturns and exhibits a strong decatenase activity. This Halobacterium salinarum (strain ATCC 29341 / DSM 671 / R1) protein is Type 2 DNA topoisomerase 6 subunit B.